A 274-amino-acid chain; its full sequence is 3-methyl-2-oxobutanoate hydroxymethyltransferase (274 aa).

Residues D44 and D83 each coordinate Mg(2+). 3-methyl-2-oxobutanoate contacts are provided by residues 44–45 (DS), D83, and K113. Position 115 (E115) interacts with Mg(2+). E182 acts as the Proton acceptor in catalysis.

It belongs to the PanB family. Homodecamer; pentamer of dimers. Requires Mg(2+) as cofactor.

The protein localises to the cytoplasm. It carries out the reaction 3-methyl-2-oxobutanoate + (6R)-5,10-methylene-5,6,7,8-tetrahydrofolate + H2O = 2-dehydropantoate + (6S)-5,6,7,8-tetrahydrofolate. The protein operates within cofactor biosynthesis; (R)-pantothenate biosynthesis; (R)-pantoate from 3-methyl-2-oxobutanoate: step 1/2. In terms of biological role, catalyzes the reversible reaction in which hydroxymethyl group from 5,10-methylenetetrahydrofolate is transferred onto alpha-ketoisovalerate to form ketopantoate. The protein is 3-methyl-2-oxobutanoate hydroxymethyltransferase of Campylobacter jejuni subsp. jejuni serotype O:6 (strain 81116 / NCTC 11828).